The chain runs to 118 residues: uncharacterized protein (118 aa).

The segment at 98 to 118 is disordered; the sequence is KGKGNEGREEAEEPLEEPEEG. The span at 106-118 shows a compositional bias: acidic residues; sequence EEAEEPLEEPEEG.

This sequence belongs to the UPF0440 family.

This is an uncharacterized protein from Pyrococcus abyssi (strain GE5 / Orsay).